We begin with the raw amino-acid sequence, 160 residues long: Type IV major fimbrial protein FimA (160 aa).

A propeptide spans 1–7 (MKSLQKG) (leader sequence). The residue at position 8 (F8) is an N-methylphenylalanine. A helical transmembrane segment spans residues 8-28 (FTLIELMIVVAIIGILAAIAI).

It belongs to the N-Me-Phe pilin family. As to quaternary structure, the pili are polar flexible filaments of about 5.4 nanometers diameter and 2.5 micrometers average length; they consist of only a single polypeptide chain arranged in a helical configuration of five subunits per turn in the assembled pilus.

It localises to the fimbrium. The protein resides in the membrane. Functionally, major component of the type IV fimbriae that plays an essential role in twitching motility, natural transformation, and protease secretion. The sequence is that of Type IV major fimbrial protein FimA (fimA) from Dichelobacter nodosus (Bacteroides nodosus).